We begin with the raw amino-acid sequence, 278 residues long: Putative ABC transporter ATP-binding protein MTBMA_c05830 (278 aa).

The region spanning 4-239 (IEAVNIRYTY…IDTIRGADLR (236 aa)) is the ABC transporter domain. 37 to 44 (GPNGAGKS) provides a ligand contact to ATP.

The protein belongs to the ABC transporter superfamily.

It is found in the cell membrane. Probably part of an ABC transporter complex. Responsible for energy coupling to the transport system. This chain is Putative ABC transporter ATP-binding protein MTBMA_c05830, found in Methanothermobacter marburgensis (strain ATCC BAA-927 / DSM 2133 / JCM 14651 / NBRC 100331 / OCM 82 / Marburg) (Methanobacterium thermoautotrophicum).